Here is a 1080-residue protein sequence, read N- to C-terminus: Presequence protease 2, chloroplastic/mitochondrial (1080 aa).

A chloroplast and mitochondrion-targeting transit peptide spans 1 to 84; it reads MLRSLTCSST…NGQFSRLSIR (84 aa). Histidine 161 serves as a coordination point for Zn(2+). Glutamate 164 functions as the Proton acceptor in the catalytic mechanism. Histidine 165 provides a ligand contact to Zn(2+). Glutamate 239 is an active-site residue. Position 261 (glutamate 261) interacts with Zn(2+). A Mg(2+)-binding site is contributed by arginine 704.

This sequence belongs to the peptidase M16 family. PreP subfamily. As to quaternary structure, homodimer. It depends on Zn(2+) as a cofactor. Requires Mg(2+) as cofactor. Expressed in leaves, flowers and roots, but not detected in siliques and shoots.

Its subcellular location is the plastid. It localises to the chloroplast stroma. The protein localises to the mitochondrion matrix. Its activity is regulated as follows. Completely inhibited by the metal chelator orthophenanthroline. In terms of biological role, ATP-independent protease that degrades both mitochondrial and chloroplastic transit peptides after their cleavage. Also degrades other unstructured peptides. Specific for peptides in the range of 10 to 65 residues. Shows a preference for cleavage after small polar residues and before basic residues, but without any positional preference. This Arabidopsis thaliana (Mouse-ear cress) protein is Presequence protease 2, chloroplastic/mitochondrial (PREP2).